The chain runs to 255 residues: 4-hydroxy-tetrahydrodipicolinate reductase (255 aa).

Residues 8–13 (GATGRV), 88–90 (GTT), and 112–115 (ATNM) each bind NAD(+). H144 (proton donor/acceptor) is an active-site residue. A (S)-2,3,4,5-tetrahydrodipicolinate-binding site is contributed by H145. Catalysis depends on K148, which acts as the Proton donor. 154-155 (GT) is a binding site for (S)-2,3,4,5-tetrahydrodipicolinate.

The protein belongs to the DapB family.

It is found in the cytoplasm. It catalyses the reaction (S)-2,3,4,5-tetrahydrodipicolinate + NAD(+) + H2O = (2S,4S)-4-hydroxy-2,3,4,5-tetrahydrodipicolinate + NADH + H(+). The enzyme catalyses (S)-2,3,4,5-tetrahydrodipicolinate + NADP(+) + H2O = (2S,4S)-4-hydroxy-2,3,4,5-tetrahydrodipicolinate + NADPH + H(+). It functions in the pathway amino-acid biosynthesis; L-lysine biosynthesis via DAP pathway; (S)-tetrahydrodipicolinate from L-aspartate: step 4/4. Catalyzes the conversion of 4-hydroxy-tetrahydrodipicolinate (HTPA) to tetrahydrodipicolinate. In Helicobacter hepaticus (strain ATCC 51449 / 3B1), this protein is 4-hydroxy-tetrahydrodipicolinate reductase.